A 451-amino-acid polypeptide reads, in one-letter code: CBL-interacting protein kinase 22 (451 aa).

In terms of domain architecture, Protein kinase spans 26–301 (YELGRVLGQG…IGEIFDHPWL (276 aa)). Residues 32 to 40 (LGQGASSKV) and lysine 55 each bind ATP. Aspartate 165 serves as the catalytic Proton acceptor. An activation loop region spans residues 183-216 (DFGLSAFADADQHLGATDGLAATHCGSPAYVAPE). The 27-residue stretch at 330–356 (ELEQAMELNAFDIIGFASGCDLSGLIG) folds into the NAF domain. The interval 361-389 (RVRFVLPGGDSKSVLDKVEKLGREEGLVV) is PPI.

The protein belongs to the protein kinase superfamily. CAMK Ser/Thr protein kinase family. SNF1 subfamily. Mn(2+) serves as cofactor.

It carries out the reaction L-seryl-[protein] + ATP = O-phospho-L-seryl-[protein] + ADP + H(+). The enzyme catalyses L-threonyl-[protein] + ATP = O-phospho-L-threonyl-[protein] + ADP + H(+). Its function is as follows. CIPK serine-threonine protein kinases interact with CBL proteins. Binding of a CBL protein to the regulatory NAF domain of CIPK protein lead to the activation of the kinase in a calcium-dependent manner. The sequence is that of CBL-interacting protein kinase 22 (CIPK22) from Oryza sativa subsp. japonica (Rice).